A 222-amino-acid polypeptide reads, in one-letter code: ATP synthase F(0) complex subunit a (222 aa).

6 helical membrane-spanning segments follow: residues 8–28 (FFYV…ILLP), 64–84 (WSLM…LGLL), 93–113 (QLTV…VPGF), 127–147 (QGTP…SLLI), 160–180 (ITAG…LSSI), and 197–219 (ILEL…LYLH).

The protein belongs to the ATPase A chain family. In terms of assembly, component of the ATP synthase complex composed at least of ATP5F1A/subunit alpha, ATP5F1B/subunit beta, ATP5MC1/subunit c (homooctomer), MT-ATP6/subunit a, MT-ATP8/subunit 8, ATP5ME/subunit e, ATP5MF/subunit f, ATP5MG/subunit g, ATP5MK/subunit k, ATP5MJ/subunit j, ATP5F1C/subunit gamma, ATP5F1D/subunit delta, ATP5F1E/subunit epsilon, ATP5PF/subunit F6, ATP5PB/subunit b, ATP5PD/subunit d, ATP5PO/subunit OSCP. ATP synthase complex consists of a soluble F(1) head domain (subunits alpha(3) and beta(3)) - the catalytic core - and a membrane F(0) domain - the membrane proton channel (subunits c, a, 8, e, f, g, k and j). These two domains are linked by a central stalk (subunits gamma, delta, and epsilon) rotating inside the F1 region and a stationary peripheral stalk (subunits F6, b, d, and OSCP). Interacts with DNAJC30; interaction is direct.

Its subcellular location is the mitochondrion inner membrane. It catalyses the reaction H(+)(in) = H(+)(out). Subunit a, of the mitochondrial membrane ATP synthase complex (F(1)F(0) ATP synthase or Complex V) that produces ATP from ADP in the presence of a proton gradient across the membrane which is generated by electron transport complexes of the respiratory chain. ATP synthase complex consist of a soluble F(1) head domain - the catalytic core - and a membrane F(1) domain - the membrane proton channel. These two domains are linked by a central stalk rotating inside the F(1) region and a stationary peripheral stalk. During catalysis, ATP synthesis in the catalytic domain of F(1) is coupled via a rotary mechanism of the central stalk subunits to proton translocation. With the subunit c (ATP5MC1), forms the proton-conducting channel in the F(0) domain, that contains two crucial half-channels (inlet and outlet) that facilitate proton movement from the mitochondrial intermembrane space (IMS) into the matrix. Protons are taken up via the inlet half-channel and released through the outlet half-channel, following a Grotthuss mechanism. This is ATP synthase F(0) complex subunit a from Loxodonta africana (African elephant).